The primary structure comprises 134 residues: ATP synthase epsilon chain (134 aa).

The span at 94-104 shows a compositional bias: basic and acidic residues; the sequence is AKLAKSRAESH. Residues 94–115 form a disordered region; sequence AKLAKSRAESHLEEDDDNTDIN.

The protein belongs to the ATPase epsilon chain family. In terms of assembly, F-type ATPases have 2 components, CF(1) - the catalytic core - and CF(0) - the membrane proton channel. CF(1) has five subunits: alpha(3), beta(3), gamma(1), delta(1), epsilon(1). CF(0) has three main subunits: a, b and c.

It is found in the cell membrane. Its function is as follows. Produces ATP from ADP in the presence of a proton gradient across the membrane. The polypeptide is ATP synthase epsilon chain (Staphylococcus epidermidis (strain ATCC 35984 / DSM 28319 / BCRC 17069 / CCUG 31568 / BM 3577 / RP62A)).